The following is an 86-amino-acid chain: Photosystem I reaction center subunit PsaK 1 (86 aa).

Positions 1 to 8 (MLTSTLLA) are excised as a propeptide. A run of 2 helical transmembrane segments spans residues 14-34 (LEWSPTVGIIMVIANVIAITF) and 60-80 (PALLATTAFGHILGVGLVLGL).

It belongs to the PsaG/PsaK family. As to quaternary structure, the cyanobacterial PSI reaction center is composed of one copy each of PsaA,B,C,D,E,F,I,J,K,L,M and X, and forms dimeric and tetrameric complexes.

Its subcellular location is the cellular thylakoid membrane. The protein is Photosystem I reaction center subunit PsaK 1 (psaK1) of Nostoc sp. (strain PCC 7120 / SAG 25.82 / UTEX 2576).